A 273-amino-acid polypeptide reads, in one-letter code: Dermonecrotic toxin (273 aa).

Positions 20 and 22 each coordinate Mg(2+). His-35 acts as the Nucleophile in catalysis. Cysteines 39 and 45 form a disulfide. Asp-79 lines the Mg(2+) pocket.

This sequence belongs to the arthropod phospholipase D family. Class I subfamily. It depends on Mg(2+) as a cofactor. As to expression, expressed by the venom gland.

It is found in the secreted. The enzyme catalyses an N-(acyl)-sphingosylphosphocholine = an N-(acyl)-sphingosyl-1,3-cyclic phosphate + choline. The catalysed reaction is an N-(acyl)-sphingosylphosphoethanolamine = an N-(acyl)-sphingosyl-1,3-cyclic phosphate + ethanolamine. It catalyses the reaction a 1-acyl-sn-glycero-3-phosphocholine = a 1-acyl-sn-glycero-2,3-cyclic phosphate + choline. It carries out the reaction a 1-acyl-sn-glycero-3-phosphoethanolamine = a 1-acyl-sn-glycero-2,3-cyclic phosphate + ethanolamine. In terms of biological role, dermonecrotic toxins cleave the phosphodiester linkage between the phosphate and headgroup of certain phospholipids (sphingolipid and lysolipid substrates), forming an alcohol (often choline) and a cyclic phosphate. This toxin acts on sphingomyelin (SM). It may also act on ceramide phosphoethanolamine (CPE), lysophosphatidylcholine (LPC) and lysophosphatidylethanolamine (LPE), but not on lysophosphatidylserine (LPS), and lysophosphatidylglycerol (LPG). It acts by transphosphatidylation, releasing exclusively cyclic phosphate products as second products. Induces dermonecrosis, hemolysis, increased vascular permeability, edema, inflammatory response, and platelet aggregation. This Loxosceles laeta (South American recluse spider) protein is Dermonecrotic toxin.